Here is a 587-residue protein sequence, read N- to C-terminus: Putative adenylate cyclase 3 (587 aa).

The Guanylate cyclase domain occupies 12-127 (AILAADAVGY…DGVNVAARIE (116 aa)). TPR repeat units lie at residues 343 to 376 (LLVRSRQAILQFNALSSMEARRMLHRVLEIDPGM), 421 to 454 (PQGHYTLALALSWMRRLDEAEHAAERAIELDPNS), 455 to 488 (ANAYTALGTIRDFQGRHEEALALYTRAHRLDPQF), 490 to 522 (LSLHFQGRALLNLGRFDEAEVAFKRRLLLAPRS), and 524 to 556 (MTRFYLACLYGRTGRHEEARGYWREVLGVNPSF).

Belongs to the adenylyl cyclase class-3 family.

The enzyme catalyses ATP = 3',5'-cyclic AMP + diphosphate. The protein is Putative adenylate cyclase 3 (cya3) of Rhizobium meliloti (strain 1021) (Ensifer meliloti).